A 321-amino-acid chain; its full sequence is Glucokinase (321 aa).

ATP is bound at residue 8–13 (GDVGGT).

This sequence belongs to the bacterial glucokinase family.

Its subcellular location is the cytoplasm. It carries out the reaction D-glucose + ATP = D-glucose 6-phosphate + ADP + H(+). The polypeptide is Glucokinase (Klebsiella pneumoniae (strain 342)).